We begin with the raw amino-acid sequence, 255 residues long: uncharacterized protein (255 aa).

Residues 1–23 (MKRLNKLVLGISFLFLVISITAG) form the signal peptide. Cysteine 24 carries the N-palmitoyl cysteine lipid modification. The S-diacylglycerol cysteine moiety is linked to residue cysteine 24.

It belongs to the staphylococcal tandem lipoprotein family.

It localises to the cell membrane. This is an uncharacterized protein from Staphylococcus aureus (strain N315).